The following is a 1099-amino-acid chain: Mediator of RNA polymerase II transcription subunit 5 (1099 aa).

A disordered region spans residues 41–66 (DNDDAKTQEGSGSQDKTDVEESISKP).

It belongs to the Mediator complex subunit 5 family. In terms of assembly, component of the Mediator complex.

Its subcellular location is the nucleus. Its function is as follows. Component of the Mediator complex, a coactivator involved in the regulated transcription of nearly all RNA polymerase II-dependent genes. Mediator functions as a bridge to convey information from gene-specific regulatory proteins to the basal RNA polymerase II transcription machinery. Mediator is recruited to promoters by direct interactions with regulatory proteins and serves as a scaffold for the assembly of a functional preinitiation complex with RNA polymerase II and the general transcription factors. The protein is Mediator of RNA polymerase II transcription subunit 5 (NUT1) of Candida glabrata (strain ATCC 2001 / BCRC 20586 / JCM 3761 / NBRC 0622 / NRRL Y-65 / CBS 138) (Yeast).